A 4069-amino-acid chain; its full sequence is Cardiomyopathy-associated protein 5 (4069 aa).

23 disordered regions span residues 1–177 (MASR…SQVL), 341–387 (TVPS…DTPA), 442–525 (GLAA…EDSN), 538–558 (ESPL…VEHK), 597–705 (EYSV…VPSL), 732–793 (PSEE…RFTP), 844–872 (SSPD…APPL), 890–948 (LERY…FSPD), 979–1009 (TSPS…VSIP), 1041–1097 (ADEE…PEIP), 1160–1179 (VKEE…SVPA), 1205–1237 (RKEE…PESE), 1540–1575 (KETE…ELEN), 1594–1742 (PAVE…EEFQ), 1757–1809 (HPAD…ITEP), 1892–1988 (ENWM…VKLA), 2064–2175 (TISS…KKGI), 2187–2259 (FGSS…SGDG), 2385–2412 (PQQP…SIIL), 2425–2463 (SEDR…LENR), 2494–2527 (TQIT…NERP), 2653–2706 (QEGN…VGTQ), and 2750–2862 (SSRD…SDVP). Positions 27-47 (ETEEESEGEEDETAAESEEEP) are enriched in acidic residues. The segment covering 48-62 (DSRLSDQDEEGKIKQ) has biased composition (basic and acidic residues). The span at 84 to 119 (TWETNSSRSSTPWASEESQTSGVCSREGSTVNSPPG) shows a compositional bias: polar residues. Over residues 130-153 (KVRKRTHKSKHGSPSLRRKGNRKR) the composition is skewed to basic residues. Residue S155 is modified to Phosphoserine. Polar residues-rich tracts occupy residues 156–177 (FESQ…SQVL) and 341–350 (TVPSYSSSGR). The segment covering 489 to 499 (LEPSISLSEPL) has biased composition (low complexity). The span at 500-510 (MLEEPEKEEIE) shows a compositional bias: acidic residues. S631 is subject to Phosphoserine. The segment covering 640–659 (AYSPAAAPTSESSLSPSTTE) has biased composition (low complexity). Composition is skewed to polar residues over residues 664–673 (NQSPLFSTVT), 692–701 (PDSTSASEYS), and 752–775 (PSLS…TATS). Over residues 1049–1063 (TAATPVSEQFSSSQK) the composition is skewed to polar residues. Residues 1085–1094 (DKSEKAEIKP) show a composition bias toward basic and acidic residues. The span at 1214–1223 (QEATAHVSQD) shows a compositional bias: polar residues. A compositionally biased stretch (basic and acidic residues) spans 1621 to 1630 (EPEKKDKPHQ). The span at 1639 to 1662 (SEFSSDLGRQSGSIGTKQAKSPIT) shows a compositional bias: polar residues. Composition is skewed to basic and acidic residues over residues 1668–1687 (VLEK…ENRE), 1704–1714 (LREESQNEEIK), and 1786–1795 (ILDKLSEETG). Residues 1796–1808 (HPNSSQVLQSITE) show a composition bias toward polar residues. Residues 1935 to 1955 (SKDHTCEVRKQVLPHSAEESH) show a composition bias toward basic and acidic residues. Residues 1956-1980 (LSSQEAVSALDTSSGNTETLSSKSY) are compositionally biased toward polar residues. The span at 2085–2124 (NEKEAHRSTPPFPEEKPLEESKMVQSKVIDDADEGKKPSP) shows a compositional bias: basic and acidic residues. A compositionally biased stretch (polar residues) spans 2145–2155 (SPESPEVTQNP). Basic and acidic residues-rich tracts occupy residues 2162–2172 (AKPDLPEEKGK) and 2232–2250 (KPAD…DEPR). Residues 2387 to 2399 (QPKSASSNFASKN) are compositionally biased toward polar residues. Residue S2404 is modified to Phosphoserine. Positions 2441–2461 (ISEEETKLRSVSPTEKKDNLE) are enriched in basic and acidic residues. Basic and acidic residues-rich tracts occupy residues 2661 to 2681 (KSSR…ESEL), 2750 to 2769 (SSRD…ESEL), and 2777 to 2804 (ITKE…ETKS). S2813 carries the phosphoserine modification. A compositionally biased stretch (basic and acidic residues) spans 2830–2847 (AVKKKEMPRSELTPERHT). The stretch at 2964–2988 (SIDQEESEQMQDKLEYLEEKASFKT) forms a coiled coil. Positions 3015–3031 (PLKENKQKETHKTKEEI) are enriched in basic and acidic residues. Disordered stretches follow at residues 3015 to 3037 (PLKE…DSET), 3119 to 3156 (EKGH…PGMP), 3204 to 3231 (KKKE…SDTD), 3386 to 3421 (SGAT…QDEY), and 3465 to 3495 (EFAS…SSEV). Residues 3052 to 3365 (YFEKYTLIDY…GSHGNEVGNA (314 aa)) are required for RYR2 clustering. The span at 3128-3138 (PETQSQNSADR) shows a compositional bias: polar residues. Over residues 3139 to 3150 (NVSKDTKRDVDS) the composition is skewed to basic and acidic residues. Positions 3213–3227 (EGDSVNSEASFPSRN) are enriched in polar residues. S3228 is modified (phosphoserine). Over residues 3477–3489 (EQKELGSERKEED) the composition is skewed to basic and acidic residues. The segment at 3517-3544 (KCPISATDKVFGTHKDHEVSTLDTAISA) is amphipathic helix H1. Residues 3544–3653 (AVKVQLAEFL…REAEELDEAV (110 aa)) adopt a coiled-coil conformation. The tract at residues 3545–3672 (VKVQLAEFLE…ERLLSAMEST (128 aa)) is B-box coiled-coil; BBC. Positions 3631–3648 (SMDTAKDTLETIVREAEE) are amphipathic helix H2. 2 consecutive Fibronectin type-III domains span residues 3704–3805 (VPQP…TAPS) and 3806–3898 (TPVI…TRGT). The interval 3751 to 3767 (EVNELVEEYRLTVKESY) is amphipathic helix H3. Positions 3880–4065 (NAFGTSEQSE…LHLGIEPPDS (186 aa)) constitute a B30.2/SPRY domain.

Interacts with PRKAR2A. Interacts with ACTN2 and DTNBP1/dysbindin. Interacts with DES. Interacts with DMD/dystrophin. Interacts with the calcineurin catalytic subunit PPP3CA. Interacts with TTN. Interacts with CAPN3; this interaction, which results in CMYA5 proteolysis, may protect CAPN3 from autolysis. Interacts with FSD2. Identified in a complex composed of FSD2, CMYA5 and RYR2. In terms of processing, phosphorylated by PKA. Expressed in skeletal muscle; at a strong level and in heart.

Its subcellular location is the nucleus. It is found in the sarcoplasmic reticulum. The protein localises to the cytoplasm. It localises to the perinuclear region. The protein resides in the myofibril. Its subcellular location is the sarcomere. It is found in the m line. Functionally, may serve as an anchoring protein that mediates the subcellular compartmentation of protein kinase A (PKA) via binding to PRKAR2A. May function as a repressor of calcineurin-mediated transcriptional activity. May attenuate calcineurin ability to induce slow-fiber gene program in muscle and may negatively modulate skeletal muscle regeneration. Plays a role in the assembly of ryanodine receptor (RYR2) clusters in striated muscle. In Homo sapiens (Human), this protein is Cardiomyopathy-associated protein 5 (CMYA5).